A 665-amino-acid polypeptide reads, in one-letter code: MITQKDYEKLCHEIWHHNKLYYIEHQPIISDEEFDALLKKLEEIERSHPEWITEFSPSQRVNESLTSGFKTVAHRTPMLSLANTYSKEEIEDFIKRLQKLVGKRQVEFSVELKMDGIAITAIYEQGIFKRGITRGNGKRGDDITTNMRMIENLPLQLSGENLPDFLEIRGEVFMPRQVFLQLNEQKLQDGEVLWANPRNAAAGSLKLLDPKMVAERRLAVVFYGLAEDSSASIKKQAEVPSFFRSIGLPALEHHAYCQNIEQIWKFAEEIRSLRTILPYDIDGIVIKLNDFKDQKRLGVTGKSPRWAIAYKFAAEQAKTRIIDITVQIGRTGVLTPVAELEPIFLSGSTIARASLYNQEEVQRKDIRIGDLVTIEKGGDVIPKVLNVELSQRPLHSQPWQMPLYCPSCGTQVINIIGEVAVRCPNEDSCTEQQIRKLIYFVGKQAMDIKHMGEKIVIQLFQKGFIHLPSDIFALTEGQISQLTNFKTKAIQNLMRSIEESKHVSLERFIMALEIKYIGIGTAELLAARAGTIETLMQLNEEDLIKIEGVGGKVAQAVVEHFQNPKHRQEVYRLLELGVCPQSKTVQIFTNHAFQGKIFVLTGSLEHYTRQSAASLIKERGGKVSDSVSRKTNYVVAGAEPGSKLDKARTLGIPVLNEKEFISLCH.

Residues 31–35 (DEEFD), 80–81 (SL), and Glu111 each bind NAD(+). Lys113 acts as the N6-AMP-lysine intermediate in catalysis. 4 residues coordinate NAD(+): Arg134, Glu171, Lys287, and Lys311. Residues Cys405, Cys408, Cys423, and Cys429 each coordinate Zn(2+). The BRCT domain occupies 588–665 (FTNHAFQGKI…NEKEFISLCH (78 aa)).

It belongs to the NAD-dependent DNA ligase family. LigA subfamily. It depends on Mg(2+) as a cofactor. The cofactor is Mn(2+).

It catalyses the reaction NAD(+) + (deoxyribonucleotide)n-3'-hydroxyl + 5'-phospho-(deoxyribonucleotide)m = (deoxyribonucleotide)n+m + AMP + beta-nicotinamide D-nucleotide.. DNA ligase that catalyzes the formation of phosphodiester linkages between 5'-phosphoryl and 3'-hydroxyl groups in double-stranded DNA using NAD as a coenzyme and as the energy source for the reaction. It is essential for DNA replication and repair of damaged DNA. This Protochlamydia amoebophila (strain UWE25) protein is DNA ligase.